The primary structure comprises 275 residues: NH(3)-dependent NAD(+) synthetase (275 aa).

47-54 provides a ligand contact to ATP; the sequence is GISGGQDS. Asp53 is a Mg(2+) binding site. Residue Arg141 coordinates deamido-NAD(+). ATP is bound at residue Thr161. Glu166 contacts Mg(2+). Residues Lys174 and Asp181 each contribute to the deamido-NAD(+) site. Residues Lys190 and Thr212 each coordinate ATP. 261-262 lines the deamido-NAD(+) pocket; that stretch reads HK.

This sequence belongs to the NAD synthetase family. Homodimer.

It carries out the reaction deamido-NAD(+) + NH4(+) + ATP = AMP + diphosphate + NAD(+) + H(+). Its pathway is cofactor biosynthesis; NAD(+) biosynthesis; NAD(+) from deamido-NAD(+) (ammonia route): step 1/1. In terms of biological role, catalyzes the ATP-dependent amidation of deamido-NAD to form NAD. Uses ammonia as a nitrogen source. This is NH(3)-dependent NAD(+) synthetase from Latilactobacillus sakei subsp. sakei (strain 23K) (Lactobacillus sakei subsp. sakei).